The sequence spans 227 residues: Cytochrome c oxidase subunit 2 (227 aa).

At 1-14 (MAYPFQLGLQDATS) the chain is on the mitochondrial intermembrane side. A helical membrane pass occupies residues 15–45 (PIMEELTNFHDHTLMIVFLISSLVLYIISLM). Residues 46–59 (LTTKLTHTSTMDAQ) are Mitochondrial matrix-facing. The helical transmembrane segment at 60–87 (EVETIWTILPAAILVLIALPSLRILYMM) threads the bilayer. At 88-227 (DEINNPVLTV…HFENWSASMV (140 aa)) the chain is on the mitochondrial intermembrane side. His161, Cys196, Glu198, Cys200, His204, and Met207 together coordinate Cu cation. Mg(2+) is bound at residue Glu198.

It belongs to the cytochrome c oxidase subunit 2 family. In terms of assembly, component of the cytochrome c oxidase (complex IV, CIV), a multisubunit enzyme composed of 14 subunits. The complex is composed of a catalytic core of 3 subunits MT-CO1, MT-CO2 and MT-CO3, encoded in the mitochondrial DNA, and 11 supernumerary subunits COX4I, COX5A, COX5B, COX6A, COX6B, COX6C, COX7A, COX7B, COX7C, COX8 and NDUFA4, which are encoded in the nuclear genome. The complex exists as a monomer or a dimer and forms supercomplexes (SCs) in the inner mitochondrial membrane with NADH-ubiquinone oxidoreductase (complex I, CI) and ubiquinol-cytochrome c oxidoreductase (cytochrome b-c1 complex, complex III, CIII), resulting in different assemblies (supercomplex SCI(1)III(2)IV(1) and megacomplex MCI(2)III(2)IV(2)). Found in a complex with TMEM177, COA6, COX18, COX20, SCO1 and SCO2. Interacts with TMEM177 in a COX20-dependent manner. Interacts with COX20. Interacts with COX16. The cofactor is Cu cation.

The protein localises to the mitochondrion inner membrane. It carries out the reaction 4 Fe(II)-[cytochrome c] + O2 + 8 H(+)(in) = 4 Fe(III)-[cytochrome c] + 2 H2O + 4 H(+)(out). Its function is as follows. Component of the cytochrome c oxidase, the last enzyme in the mitochondrial electron transport chain which drives oxidative phosphorylation. The respiratory chain contains 3 multisubunit complexes succinate dehydrogenase (complex II, CII), ubiquinol-cytochrome c oxidoreductase (cytochrome b-c1 complex, complex III, CIII) and cytochrome c oxidase (complex IV, CIV), that cooperate to transfer electrons derived from NADH and succinate to molecular oxygen, creating an electrochemical gradient over the inner membrane that drives transmembrane transport and the ATP synthase. Cytochrome c oxidase is the component of the respiratory chain that catalyzes the reduction of oxygen to water. Electrons originating from reduced cytochrome c in the intermembrane space (IMS) are transferred via the dinuclear copper A center (CU(A)) of subunit 2 and heme A of subunit 1 to the active site in subunit 1, a binuclear center (BNC) formed by heme A3 and copper B (CU(B)). The BNC reduces molecular oxygen to 2 water molecules using 4 electrons from cytochrome c in the IMS and 4 protons from the mitochondrial matrix. This Uromys caudimaculatus (Giant white-tailed rat) protein is Cytochrome c oxidase subunit 2 (MT-CO2).